Here is a 588-residue protein sequence, read N- to C-terminus: Complement component C8 beta chain (588 aa).

The first 30 residues, 1–30, serve as a signal peptide directing secretion; sequence MFRVAIPRSALNLHSCLLHVTLSLVLISKA. The propeptide occupies 31–46; it reads AITTAGNEDSDVREAR. The 56-residue stretch at 58-113 folds into the TSP type-1 1 domain; it reads DCVISDWSAWSRCDTCQKKRYRYAKLDQPSQFGGEPCHFHDMEDEACDVPDRYTCD. Disulfide bonds link Cys-59–Cys-94, Cys-70–Cys-104, Cys-73–Cys-112, Cys-118–Cys-129, Cys-123–Cys-142, Cys-136–Cys-151, and Cys-158–Cys-196. C-linked (Man) tryptophan glycosylation is found at Trp-64 and Trp-67. The LDL-receptor class A domain occupies 115 to 152; sequence IPLCEGFLCTQTGRCIHRTLQCNGEDDCGDMSDEVGCK. Leu-134, Asn-137, Glu-139, Asp-141, Asp-147, and Glu-148 together coordinate Ca(2+). The MACPF domain maps to 154-500; sequence VPKPCRQEAE…EYLAESSSCR (347 aa). 4 consecutive transmembrane segments (beta stranded) span residues 248-255, 258-265, 375-382, and 388-395; these read TIVSIGFA, GIAEFGFN, TQAGLKIG, and VYVSAGIE. 5 cysteine pairs are disulfide-bonded: Cys-374-Cys-399, Cys-499-Cys-547, Cys-501-Cys-517, Cys-504-Cys-519, and Cys-521-Cys-530. In terms of domain architecture, EGF-like spans 501 to 531; it reads CAPCHNNGVAVLRGTRCDCVCPTGYTGRGCE. The 47-residue stretch at 542-588 folds into the TSP type-1 2 domain; the sequence is DGSWSCWGAWSSCSGRKMSRSRQCNNPVPSDGGLACRGLQQESTDCF. 2 C-linked (Man) tryptophan glycosylation sites follow: Trp-548 and Trp-551. An intrachain disulfide couples Cys-554 to Cys-587.

It belongs to the complement C6/C7/C8/C9 family. As to quaternary structure, heterotrimer of 3 chains: alpha (C8A), beta (C8B) and gamma (C8G); the alpha and gamma chains are disulfide bonded. Component of the membrane attack complex (MAC), composed of complement C5b, C6, C7, C8A, C8B, C8G and multiple copies of the pore-forming subunit C9.

The protein localises to the secreted. It localises to the target cell membrane. Functionally, component of the membrane attack complex (MAC), a multiprotein complex activated by the complement cascade, which inserts into a target cell membrane and forms a pore, leading to target cell membrane rupture and cell lysis. The MAC is initiated by proteolytic cleavage of C5 into complement C5b in response to the classical, alternative, lectin and GZMK complement pathways. The complement pathways consist in a cascade of proteins that leads to phagocytosis and breakdown of pathogens and signaling that strengthens the adaptive immune system. C8B, together with C8A and C8G, inserts into the target membrane, but does not form pores by itself. During MAC assembly, associates with C5b, C6 and C7 to form the C5b8 intermediate complex that inserts into the target membrane and traverses the bilayer increasing membrane rigidity. The polypeptide is Complement component C8 beta chain (c8b) (Paralichthys olivaceus (Bastard halibut)).